A 186-amino-acid chain; its full sequence is UPF0200 protein PH1008 (186 aa).

7 to 14 (GMPGSGKG) is an ATP binding site.

Belongs to the UPF0200 family.

This chain is UPF0200 protein PH1008, found in Pyrococcus horikoshii (strain ATCC 700860 / DSM 12428 / JCM 9974 / NBRC 100139 / OT-3).